A 332-amino-acid chain; its full sequence is 2,3-diketo-L-gulonate reductase (332 aa).

His44 acts as the Proton donor in catalysis. Residues 168–174, 224–225, and 304–306 contribute to the NAD(+) site; these read ITMVDMS, WK, and GHE.

Belongs to the LDH2/MDH2 oxidoreductase family. DlgD subfamily. In terms of assembly, homodimer.

The protein resides in the cytoplasm. It carries out the reaction 3-dehydro-L-gulonate + NAD(+) = 2,3-dioxo-L-gulonate + NADH + H(+). It catalyses the reaction 3-dehydro-L-gulonate + NADP(+) = 2,3-dioxo-L-gulonate + NADPH + H(+). Its function is as follows. Catalyzes the reduction of 2,3-diketo-L-gulonate in the presence of NADH, to form 3-keto-L-gulonate. This is 2,3-diketo-L-gulonate reductase from Shigella boydii serotype 4 (strain Sb227).